The chain runs to 460 residues: MLFNKDKNNIGGRSIESTGFAWWSGNARLINLSGKLLGAHVAHAGLIVFWTGAMTLFETSHFIPEKPLYEQGMILLPHLATLGWGVAPGGEIVNTYPYFATGVIHLVSSAVLGFGGIYHSIVGPDVLEDSFSFFGYDWRDKNKMTTILGIHLILLGIGAFLLVIKALFIGGIYDTWAPGGGDIRFITNPTLNPAIIFSYLLKSPFGGEGWIVGVNNMEDVIGGHIWIGVTCVIGGIWHILTRPFSWARRAFVWSGEAYLSYSLGALALMGQTAAEYAWYNNTVYPSEFYGPTAAEASQAQAFTFLVRDQRLGANIASTQGPTGLGKYLMRSPTGEVILGGETMRFWDLRAPWLEPLRSSNGLDLNKIKNDIQPWQERRAAEYMTHAPLGSLNSVGGVATEINSVNYVSPRSWLTTSHFFLGFFIFIGHLWHAGRARAAAAGFEKGINRENEPVLSMRPLD.

Residue Met1 is a propeptide. The next 5 helical transmembrane spans lie at 56–80 (LFET…PHLA), 121–142 (IVGP…RDKN), 165–187 (KALF…RFIT), 242–262 (RPFS…LSYS), and 278–299 (WYNN…ASQA). Glu354 contributes to the [CaMn4O5] cluster binding site. The chain crosses the membrane as a helical span at residues 434-458 (RARAAAAGFEKGINRENEPVLSMRP).

The protein belongs to the PsbB/PsbC family. PsbC subfamily. In terms of assembly, PSII is composed of 1 copy each of membrane proteins PsbA, PsbB, PsbC, PsbD, PsbE, PsbF, PsbH, PsbI, PsbJ, PsbK, PsbL, PsbM, PsbT, PsbY, PsbZ, Psb30/Ycf12, at least 3 peripheral proteins of the oxygen-evolving complex and a large number of cofactors. It forms dimeric complexes. Binds multiple chlorophylls and provides some of the ligands for the Ca-4Mn-5O cluster of the oxygen-evolving complex. It may also provide a ligand for a Cl- that is required for oxygen evolution. PSII binds additional chlorophylls, carotenoids and specific lipids. serves as cofactor.

It localises to the plastid. Its subcellular location is the chloroplast thylakoid membrane. Functionally, one of the components of the core complex of photosystem II (PSII). It binds chlorophyll and helps catalyze the primary light-induced photochemical processes of PSII. PSII is a light-driven water:plastoquinone oxidoreductase, using light energy to abstract electrons from H(2)O, generating O(2) and a proton gradient subsequently used for ATP formation. This Cyanidium caldarium (Red alga) protein is Photosystem II CP43 reaction center protein.